A 351-amino-acid chain; its full sequence is Glycerol-3-phosphate dehydrogenase [NAD(P)+] (351 aa).

NADPH-binding residues include S18, W19, R38, and K122. Sn-glycerol 3-phosphate contacts are provided by K122, G153, and S155. NADPH is bound at residue A157. Sn-glycerol 3-phosphate-binding residues include K208, D261, S271, R272, and N273. K208 serves as the catalytic Proton acceptor. R272 lines the NADPH pocket. Position 297 (E297) interacts with NADPH.

Belongs to the NAD-dependent glycerol-3-phosphate dehydrogenase family.

Its subcellular location is the cytoplasm. The enzyme catalyses sn-glycerol 3-phosphate + NAD(+) = dihydroxyacetone phosphate + NADH + H(+). The catalysed reaction is sn-glycerol 3-phosphate + NADP(+) = dihydroxyacetone phosphate + NADPH + H(+). It participates in membrane lipid metabolism; glycerophospholipid metabolism. Functionally, catalyzes the reduction of the glycolytic intermediate dihydroxyacetone phosphate (DHAP) to sn-glycerol 3-phosphate (G3P), the key precursor for phospholipid synthesis. The polypeptide is Glycerol-3-phosphate dehydrogenase [NAD(P)+] (Bordetella bronchiseptica (strain ATCC BAA-588 / NCTC 13252 / RB50) (Alcaligenes bronchisepticus)).